We begin with the raw amino-acid sequence, 553 residues long: Probable cytochrome P450 301a1, mitochondrial (553 aa).

Cys-502 is a binding site for heme.

This sequence belongs to the cytochrome P450 family. Requires heme as cofactor.

The protein resides in the mitochondrion membrane. This is Probable cytochrome P450 301a1, mitochondrial (Cyp301a1) from Drosophila melanogaster (Fruit fly).